The chain runs to 780 residues: Kazrin (780 aa).

A coiled-coil region spans residues 79 to 261 (AQVLLREEVV…LATLTKDVPK (183 aa)). Positions 295 to 430 (QQTLYHSHPP…TRHSLSLSEG (136 aa)) are disordered. Phosphoserine occurs at positions 357, 372, and 392. The segment covering 416–427 (SQCSPTRHSLSL) has biased composition (polar residues). SAM domains lie at 451–516 (WKAG…YRDA), 529–593 (DHHW…LYQV), and 617–684 (WTNQ…STVF). Positions 692 to 780 (IRESERFGTP…EYSSLEVTNV (89 aa)) are disordered. Residues 760 to 771 (LQGRPEQCRLEE) show a composition bias toward basic and acidic residues.

The protein belongs to the kazrin family.

It is found in the cell junction. The protein localises to the nucleus. It localises to the cytoplasm. The protein resides in the cytoskeleton. In terms of biological role, component of the cornified envelope of keratinocytes. May be involved in the interplay between adherens junctions and desmosomes. The function in the nucleus is not known. The polypeptide is Kazrin (Kazn) (Rattus norvegicus (Rat)).